Here is a 338-residue protein sequence, read N- to C-terminus: 2-methyl-6-phytyl-1,4-hydroquinone methyltransferase, chloroplastic (338 aa).

A chloroplast-targeting transit peptide spans 1–51; it reads MASLMLNGAITFPKGLGSPGSNLHARSIPRPTLLSVTRTSTPRLSVATRCS. At 52 to 307 the chain is on the chloroplast intermembrane side; sequence SSSVSSSRPS…VNNPFSFLGR (256 aa). An SAM motif I region spans residues 114–123; it reads VVDVGGGTGF. Residues 159 to 172 are SAM motif II; that stretch reads CKIVEGDAEDLPFP. An SAM motif III region spans residues 200–213; the sequence is RVLKIGGKACLIGP. A helical transmembrane segment spans residues 308 to 328; that stretch reads FLLGTLAAAWFVLIPIYMWIK. The Stromal segment spans residues 329 to 338; it reads DQIVPKDQPI.

This sequence belongs to the class I-like SAM-binding methyltransferase superfamily. MPBQ/MBSQ MT family.

Its subcellular location is the plastid. It localises to the chloroplast inner membrane. The catalysed reaction is 2-methyl-6-phytyl-1,4-benzene-1,4-diol + S-adenosyl-L-methionine = 2,3-dimethyl-6-phytylbenzene-1,4-diol + S-adenosyl-L-homocysteine + H(+). It carries out the reaction 2-methyl-6-(all-trans-nonaprenyl)benzene-1,4-diol + S-adenosyl-L-methionine = plastoquinol-9 + S-adenosyl-L-homocysteine + H(+). The enzyme catalyses 6-geranylgeranyl-2-methylbenzene-1,4-diol + S-adenosyl-L-methionine = 6-geranylgeranyl-2,3-dimethylbenzene-1,4-diol + S-adenosyl-L-homocysteine + H(+). It participates in cofactor biosynthesis; tocopherol biosynthesis. Involved in a key methylation step in both tocopherols (vitamin E) and plastoquinone synthesis. Catalyzes the conversion of 2-methyl-6-phytyl-1,4-hydroquinone (MPBQ) to 2,3-dimethyl-6-phytyl-1,4-hydroquinone (DMPQ, a substrate for tocopherol cyclase), and 2-methyl-6-solanyl-1,4-benzoquinone (MSBQ) to plastoquinone. The sequence is that of 2-methyl-6-phytyl-1,4-hydroquinone methyltransferase, chloroplastic (VTE3) from Arabidopsis thaliana (Mouse-ear cress).